We begin with the raw amino-acid sequence, 396 residues long: Acetate kinase (396 aa).

Asparagine 7 serves as a coordination point for Mg(2+). ATP is bound at residue lysine 14. Arginine 88 is a binding site for substrate. The active-site Proton donor/acceptor is aspartate 145. ATP contacts are provided by residues histidine 205 to glycine 209, aspartate 279 to arginine 281, and glycine 327 to asparagine 331. Glutamate 381 provides a ligand contact to Mg(2+).

The protein belongs to the acetokinase family. Homodimer. Mg(2+) is required as a cofactor. The cofactor is Mn(2+).

It localises to the cytoplasm. It carries out the reaction acetate + ATP = acetyl phosphate + ADP. It functions in the pathway metabolic intermediate biosynthesis; acetyl-CoA biosynthesis; acetyl-CoA from acetate: step 1/2. In terms of biological role, catalyzes the formation of acetyl phosphate from acetate and ATP. Can also catalyze the reverse reaction. The chain is Acetate kinase from Campylobacter jejuni subsp. jejuni serotype O:23/36 (strain 81-176).